A 1492-amino-acid polypeptide reads, in one-letter code: ATP-binding cassette sub-family C member 10 (1492 aa).

9 helical membrane passes run 32-52 (LVLS…YLGT), 70-90 (LAAS…VALP), 102-122 (VLAG…LWVL), 133-153 (PLAL…TVLW), 172-192 (LCLL…WAAP), 293-313 (LVGT…VGFL), 320-340 (LSHG…GAVL), 391-411 (LLNF…LAIT), and 414-434 (LLYQ…LLLV). The 279-residue stretch at 285–563 (YLALGLLKLV…FPWVINGLLE (279 aa)) folds into the ABC transmembrane type-1 1 domain. Thr-463 carries the phosphothreonine modification. The residue at position 467 (Ser-467) is a Phosphoserine. The next 2 helical transmembrane spans lie at 507–527 (VYLW…TYVL) and 538–558 (FTAL…PWVI). The 227-residue stretch at 598-824 (LELHGALFSW…VQAVPKAWAE (227 aa)) folds into the ABC transporter 1 domain. Residue 633–640 (GKVGCGKS) participates in ATP binding. The tract at residues 825 to 860 (NGQESDSATAQSVQNPEKTKEGLEEEQSTSGRLLQE) is disordered. Polar residues predominate over residues 826–840 (GQESDSATAQSVQNP). Helical transmembrane passes span 875–895 (AYWK…LLLM), 933–953 (LFSP…VFPL), 974–994 (IAGV…AGTL), 1051–1071 (AGLL…LLLL), 1153–1173 (IRLQ…ALVQ), and 1182–1202 (GLVG…SGLV). The ABC transmembrane type-1 2 domain maps to 885-1210 (ALAILFSLLL…LVSSFTQTEA (326 aa)). An ABC transporter 2 domain is found at 1246 to 1479 (VEFQDVVLAY…PHSLFQQLLQ (234 aa)). ATP is bound at residue 1280-1287 (GRTGSGKS).

Belongs to the ABC transporter superfamily. ABCC family. Conjugate transporter (TC 3.A.1.208) subfamily. As to expression, in testis, localized to peritubular myoid cells, Leydig cells, along the basal membrane of Sertoli cells, moderately in the adluminal compartment of the seminiferous tubules, and in vascular endothelial cells. Specifically expressed in spleen. In terms of tissue distribution, widely expressed.

The protein resides in the cell membrane. The protein localises to the basolateral cell membrane. It is found in the basal cell membrane. The enzyme catalyses ATP + H2O + xenobioticSide 1 = ADP + phosphate + xenobioticSide 2.. The catalysed reaction is an S-substituted glutathione(in) + ATP + H2O = an S-substituted glutathione(out) + ADP + phosphate + H(+). It carries out the reaction 17beta-estradiol 17-O-(beta-D-glucuronate)(in) + ATP + H2O = 17beta-estradiol 17-O-(beta-D-glucuronate)(out) + ADP + phosphate + H(+). It catalyses the reaction leukotriene C4(in) + ATP + H2O = leukotriene C4(out) + ADP + phosphate + H(+). Functionally, ATP-dependent transporter of the ATP-binding cassette (ABC) family that actively extrudes physiological compounds, and xenobiotics from cells. Lipophilic anion transporter that mediates ATP-dependent transport of glucuronide conjugates such as estradiol-17-beta-o-glucuronide and GSH conjugates such as leukotriene C4 (LTC4). May contribute to regulate the transport of organic compounds in testes across the blood-testis-barrier. Mediates multidrug resistance (MDR) in cancer cells by preventing the intracellular accumulation of certain antitumor drugs, such as, docetaxel and paclitaxel. Does not transport glycocholic acid, taurocholic acid, MTX, folic acid, cAMP, or cGMP. This chain is ATP-binding cassette sub-family C member 10 (ABCC10), found in Homo sapiens (Human).